Reading from the N-terminus, the 445-residue chain is Clusterin (445 aa).

The signal sequence occupies residues 1–22 (MMKTLLLLVGLLLTWDNGRVLG). Residues 78–81 (KKKK) carry the Nuclear localization signal motif. Residues asparagine 86 and asparagine 103 are each glycosylated (N-linked (GlcNAc...) asparagine). Intrachain disulfides connect cysteine 102–cysteine 309, cysteine 113–cysteine 301, cysteine 116–cysteine 298, cysteine 121–cysteine 291, and cysteine 129–cysteine 281. A Phosphoserine modification is found at serine 133. 5 N-linked (GlcNAc...) asparagine glycosylation sites follow: asparagine 145, asparagine 277, asparagine 287, asparagine 350, and asparagine 370. A Phosphoserine modification is found at serine 392. The short motif at 439–443 (RQKHR) is the Nuclear localization signal element.

Belongs to the clusterin family. As to quaternary structure, antiparallel disulfide-linked heterodimer of an alpha chain and a beta chain. Self-associates and forms higher oligomers. Interacts with a broad range of misfolded proteins, including APP, APOC2 and LYZ. Slightly acidic pH promotes interaction with misfolded proteins. Forms high-molecular weight oligomers upon interaction with misfolded proteins. Interacts with APOA1, LRP2, CLUAP1 and PON1. Interacts with the complement membrane attack complex. Interacts (via alpha chain) with XRCC6. Interacts with SYVN1, COMMD1, BTRC, CUL1 and with ubiquitin and SCF (SKP1-CUL1-F-box protein) E3 ubiquitin-protein ligase complexes. Interacts (via alpha chain) with BAX in stressed cells, where BAX undergoes a conformation change leading to association with the mitochondrial membrane. Does not interact with BAX in unstressed cells. Found in a complex with LTF, CLU, EPPIN and SEMG1. Interacts (immaturely glycosylated pre-secreted form) with HSPA5; this interaction promotes CLU stability and facilitates stress-induced CLU retrotranslocation from the secretory pathway to the mitochondria, thereby reducing stress-induced apoptosis by stabilizing mitochondrial membrane integrity. Interacts with BCL2L1; this interaction releases and activates BAX and promotes cell death. Interacts with TGFBR2 and ACVR1. Interacts (secreted form) with STMN3; this interaction may act as an important modulator during neuronal differentiation. Interacts with VLDLR and LRP8. Post-translationally, proteolytically cleaved on its way through the secretory system, probably within the Golgi lumen. Proteolytic cleavage is not necessary for its chaperone activity. All non-secreted forms are not proteolytically cleaved. Chaperone activity of uncleaved forms is dependent on a non-reducing environment. This proteolytic maturation is disulfide bond formation dependent. Polyubiquitinated, leading to proteasomal degradation. Under cellular stress, the intracellular level of cleaved form is reduced due to proteasomal degradation. In terms of processing, heavily N-glycosylated. About 30% of the protein mass is comprised of complex N-linked carbohydrate. Endoplasmic reticulum (ER) stress induces changes in glycosylation status and increases level of hypoglycosylated forms. Core carbohydrates are essential for chaperone activity. Non-secreted forms are hypoglycosylated or unglycosylated.

It is found in the secreted. The protein resides in the nucleus. It localises to the cytoplasm. Its subcellular location is the mitochondrion membrane. The protein localises to the cytosol. It is found in the microsome. The protein resides in the endoplasmic reticulum. It localises to the mitochondrion. Its subcellular location is the perinuclear region. The protein localises to the cytoplasmic vesicle. It is found in the secretory vesicle. The protein resides in the chromaffin granule. In terms of biological role, functions as extracellular chaperone that prevents aggregation of non native proteins. Prevents stress-induced aggregation of blood plasma proteins. Inhibits formation of amyloid fibrils by APP, APOC2, B2M, CALCA, CSN3, SNCA and aggregation-prone LYZ variants (in vitro). Does not require ATP. Maintains partially unfolded proteins in a state appropriate for subsequent refolding by other chaperones, such as HSPA8/HSC70. Does not refold proteins by itself. Binding to cell surface receptors triggers internalization of the chaperone-client complex and subsequent lysosomal or proteasomal degradation. When secreted, protects cells against apoptosis and against cytolysis by complement: inhibits assembly of the complement membrane attack complex (MAC) by preventing polymerization of C9 pore component of the MAC complex. Intracellular forms interact with ubiquitin and SCF (SKP1-CUL1-F-box protein) E3 ubiquitin-protein ligase complexes and promote the ubiquitination and subsequent proteasomal degradation of target proteins. Promotes proteasomal degradation of COMMD1 and IKBKB. Modulates NF-kappa-B transcriptional activity. Following stress, promotes apoptosis. Inhibits apoptosis when associated with the mitochondrial membrane by interference with BAX-dependent release of cytochrome c into the cytoplasm. Plays a role in the regulation of cell proliferation. An intracellular form suppresses stress-induced apoptosis by stabilizing mitochondrial membrane integrity through interaction with HSPA5. Secreted form does not affect caspase or BAX-mediated intrinsic apoptosis and TNF-induced NF-kappa-B-activity. Secreted form act as an important modulator during neuronal differentiation through interaction with STMN3. Plays a role in the clearance of immune complexes that arise during cell injury. This is Clusterin (CLU) from Canis lupus familiaris (Dog).